A 235-amino-acid chain; its full sequence is Chalcone--flavanone isomerase 2 (235 aa).

Substrate is bound by residues Thr-50 and Ser-192.

The protein belongs to the chalcone isomerase family.

It catalyses the reaction a chalcone = a flavanone.. The protein operates within secondary metabolite biosynthesis; flavonoid biosynthesis. Catalyzes the intramolecular cyclization of bicyclic chalcones into tricyclic (S)-flavanones. Responsible for the isomerization of 4,2',4',6'-tetrahydroxychalcone (also termed chalcone) into naringenin. The polypeptide is Chalcone--flavanone isomerase 2 (CHI2) (Chrysanthemum morifolium (Florist's daisy)).